The following is a 276-amino-acid chain: Large ribosomal subunit protein uL2 (276 aa).

A disordered region spans residues 223–276 (GAAMNPVDHPHGGGEGRAPRGRPPASPWGWQTKGLKTRKRRKPSSRFIIARRKK). Residues 230-240 (DHPHGGGEGRA) are compositionally biased toward basic and acidic residues. The segment covering 257-276 (LKTRKRRKPSSRFIIARRKK) has biased composition (basic residues).

The protein belongs to the universal ribosomal protein uL2 family. Part of the 50S ribosomal subunit. Forms a bridge to the 30S subunit in the 70S ribosome.

One of the primary rRNA binding proteins. Required for association of the 30S and 50S subunits to form the 70S ribosome, for tRNA binding and peptide bond formation. It has been suggested to have peptidyltransferase activity; this is somewhat controversial. Makes several contacts with the 16S rRNA in the 70S ribosome. This Thermus thermophilus (strain ATCC BAA-163 / DSM 7039 / HB27) protein is Large ribosomal subunit protein uL2.